A 368-amino-acid chain; its full sequence is 3-dehydroquinate synthase (368 aa).

Residues 69 to 74 (DGEAYK), 103 to 107 (GVIGD), 127 to 128 (TT), lysine 140, and lysine 149 each bind NAD(+). Zn(2+) contacts are provided by glutamate 182, histidine 245, and histidine 262.

This sequence belongs to the sugar phosphate cyclases superfamily. Dehydroquinate synthase family. Requires Co(2+) as cofactor. Zn(2+) is required as a cofactor. It depends on NAD(+) as a cofactor.

It localises to the cytoplasm. The catalysed reaction is 7-phospho-2-dehydro-3-deoxy-D-arabino-heptonate = 3-dehydroquinate + phosphate. It participates in metabolic intermediate biosynthesis; chorismate biosynthesis; chorismate from D-erythrose 4-phosphate and phosphoenolpyruvate: step 2/7. Catalyzes the conversion of 3-deoxy-D-arabino-heptulosonate 7-phosphate (DAHP) to dehydroquinate (DHQ). The sequence is that of 3-dehydroquinate synthase from Pseudomonas aeruginosa (strain LESB58).